The sequence spans 76 residues: Omega-scoloptoxin(15)-Ssd3c (76 aa).

The signal sequence occupies residues 1 to 23; the sequence is MEKKIIFLVVLVALLALPEFISS.

The protein belongs to the scoloptoxin-15 family. Contains 2 disulfide bonds. In terms of tissue distribution, expressed by the venom gland.

The protein resides in the secreted. Its function is as follows. Voltage-gated calcium channel inhibitor (Cav) (8.6% block at 10 nM), when tested on DRG neurons. In Scolopendra dehaani (Thai centipede), this protein is Omega-scoloptoxin(15)-Ssd3c.